A 188-amino-acid chain; its full sequence is GTPase KRas (188 aa).

GTP contacts are provided by residues 10–18 (GAGGVGKSA), 29–35 (VDEYDPT), 59–60 (AG), and 116–119 (NKYD). The Effector region signature appears at 32 to 40 (YDPTIEDSY). A disordered region spans residues 167 to 188 (KEKMSKEGKKKKKKSKTKCILM). C185 bears the Cysteine methyl ester mark. C185 is lipidated: S-farnesyl cysteine. Positions 186-188 (ILM) are cleaved as a propeptide — removed in mature form.

It belongs to the small GTPase superfamily. Ras family.

It is found in the cell membrane. The protein resides in the cytoplasm. The catalysed reaction is GTP + H2O = GDP + phosphate + H(+). With respect to regulation, alternates between an inactive form bound to GDP and an active form bound to GTP. Activated by a guanine nucleotide-exchange factor (GEF) and inactivated by a GTPase-activating protein (GAP). Functionally, ras proteins bind GDP/GTP and possess intrinsic GTPase activity. Plays an important role in the regulation of cell proliferation. May play a role in promoting oncogenic events by inducing transcriptional silencing of tumor suppressor genes (TSGs). The chain is GTPase KRas (kras) from Kryptolebias marmoratus (Mangrove killifish).